Reading from the N-terminus, the 351-residue chain is MRVDAFDFDLPSERIALRPARPRDAARMLVVDAGNIVDAGVRDLPQWLRPGDCLVFNDTRVIPAQLEGLRGEAKIGATLHKRIDLRRWQAFVRNAKRLRVGETVDFGSGVAALAEERLADGSFVLAFAGDEPVELLLERAGTMPLPPYIAGKRGADEADRDDYQTMFAREDGAVAAPTAALHFTPELLAALAAAGIATETLTLHVGAGTFLPVKADDTDDHVMHAEWGRIEADTAARLNAVRASGGRVIAVGTTSLRLLESAARDDGTITPFAGDTSIFITPGYRFKAIDGLMTNFHLPRSTLFMLVSALMGLETMQAAYAHAIAREYRFYSYGDASLLLPRQSGRSRTLS.

This sequence belongs to the QueA family. In terms of assembly, monomer.

The protein resides in the cytoplasm. The enzyme catalyses 7-aminomethyl-7-carbaguanosine(34) in tRNA + S-adenosyl-L-methionine = epoxyqueuosine(34) in tRNA + adenine + L-methionine + 2 H(+). Its pathway is tRNA modification; tRNA-queuosine biosynthesis. Transfers and isomerizes the ribose moiety from AdoMet to the 7-aminomethyl group of 7-deazaguanine (preQ1-tRNA) to give epoxyqueuosine (oQ-tRNA). The chain is S-adenosylmethionine:tRNA ribosyltransferase-isomerase from Sphingopyxis alaskensis (strain DSM 13593 / LMG 18877 / RB2256) (Sphingomonas alaskensis).